We begin with the raw amino-acid sequence, 93 residues long: Cell division protein CrgA (93 aa).

The next 2 helical transmembrane spans lie at 31–51 (VWFV…LMVF) and 70–90 (LGPW…LLTM).

Belongs to the CrgA family.

The protein resides in the cell membrane. Its function is as follows. Involved in cell division. The chain is Cell division protein CrgA from Mycobacterium marinum (strain ATCC BAA-535 / M).